Reading from the N-terminus, the 308-residue chain is Peptidyl-prolyl cis-trans isomerase CYP8 (308 aa).

The region spanning 56–215 is the PPIase cyclophilin-type domain; sequence FTDPESSEEA…QPITIGYISS (160 aa).

The enzyme catalyses [protein]-peptidylproline (omega=180) = [protein]-peptidylproline (omega=0). Functionally, PPIases accelerate the folding of proteins. It catalyzes the cis-trans isomerization of proline imidic peptide bonds in oligopeptides. The polypeptide is Peptidyl-prolyl cis-trans isomerase CYP8 (CPR8) (Saccharomyces cerevisiae (strain ATCC 204508 / S288c) (Baker's yeast)).